We begin with the raw amino-acid sequence, 1080 residues long: Carbamoyl phosphate synthase large chain (1080 aa).

The tract at residues 1–403 (MPKRTDLRTI…SLQKAVRGLE (403 aa)) is carboxyphosphate synthetic domain. ATP is bound by residues Arg129, Arg169, Gly175, Gly176, Glu208, Val210, Glu215, Gly241, Val242, His243, Gln285, and Glu299. In terms of domain architecture, ATP-grasp 1 spans 133–328 (RVAMQEIGLE…IAKIAAKLAV (196 aa)). Residues Gln285, Glu299, and Asn301 each contribute to the Mg(2+) site. Residues Gln285, Glu299, and Asn301 each coordinate Mn(2+). The interval 404–554 (TGKVGLEPTG…YSTYEEECEA (151 aa)) is oligomerization domain. Residues 555–942 (APSDRRKIMI…AFARAQEAGD (388 aa)) are carbamoyl phosphate synthetic domain. Positions 679–876 (QRLVQQLGLR…LAKIAARCMT (198 aa)) constitute an ATP-grasp 2 domain. Positions 715, 754, 756, 761, 787, 788, 789, 790, 830, and 847 each coordinate ATP. Mg(2+) is bound by residues Gln830, Glu847, and Asn849. Gln830, Glu847, and Asn849 together coordinate Mn(2+). The MGS-like domain maps to 943–1080 (IRAPQPGRAF…LQELHKELQV (138 aa)). Positions 943 to 1080 (IRAPQPGRAF…LQELHKELQV (138 aa)) are allosteric domain.

The protein belongs to the CarB family. Composed of two chains; the small (or glutamine) chain promotes the hydrolysis of glutamine to ammonia, which is used by the large (or ammonia) chain to synthesize carbamoyl phosphate. Tetramer of heterodimers (alpha,beta)4. Requires Mg(2+) as cofactor. The cofactor is Mn(2+).

The enzyme catalyses hydrogencarbonate + L-glutamine + 2 ATP + H2O = carbamoyl phosphate + L-glutamate + 2 ADP + phosphate + 2 H(+). It catalyses the reaction hydrogencarbonate + NH4(+) + 2 ATP = carbamoyl phosphate + 2 ADP + phosphate + 2 H(+). It participates in amino-acid biosynthesis; L-arginine biosynthesis; carbamoyl phosphate from bicarbonate: step 1/1. The protein operates within pyrimidine metabolism; UMP biosynthesis via de novo pathway; (S)-dihydroorotate from bicarbonate: step 1/3. Large subunit of the glutamine-dependent carbamoyl phosphate synthetase (CPSase). CPSase catalyzes the formation of carbamoyl phosphate from the ammonia moiety of glutamine, carbonate, and phosphate donated by ATP, constituting the first step of 2 biosynthetic pathways, one leading to arginine and/or urea and the other to pyrimidine nucleotides. The large subunit (synthetase) binds the substrates ammonia (free or transferred from glutamine from the small subunit), hydrogencarbonate and ATP and carries out an ATP-coupled ligase reaction, activating hydrogencarbonate by forming carboxy phosphate which reacts with ammonia to form carbamoyl phosphate. The sequence is that of Carbamoyl phosphate synthase large chain from Xylella fastidiosa (strain Temecula1 / ATCC 700964).